Here is a 229-residue protein sequence, read N- to C-terminus: Uracil-DNA glycosylase (229 aa).

Aspartate 70 functions as the Proton acceptor in the catalytic mechanism.

Belongs to the uracil-DNA glycosylase (UDG) superfamily. UNG family.

It localises to the cytoplasm. The enzyme catalyses Hydrolyzes single-stranded DNA or mismatched double-stranded DNA and polynucleotides, releasing free uracil.. In terms of biological role, excises uracil residues from the DNA which can arise as a result of misincorporation of dUMP residues by DNA polymerase or due to deamination of cytosine. The polypeptide is Uracil-DNA glycosylase (Chlamydia abortus (strain DSM 27085 / S26/3) (Chlamydophila abortus)).